Reading from the N-terminus, the 276-residue chain is Bis(5'-nucleosyl)-tetraphosphatase, symmetrical (276 aa).

This sequence belongs to the Ap4A hydrolase family.

It catalyses the reaction P(1),P(4)-bis(5'-adenosyl) tetraphosphate + H2O = 2 ADP + 2 H(+). Its function is as follows. Hydrolyzes diadenosine 5',5'''-P1,P4-tetraphosphate to yield ADP. The chain is Bis(5'-nucleosyl)-tetraphosphatase, symmetrical from Mannheimia succiniciproducens (strain KCTC 0769BP / MBEL55E).